We begin with the raw amino-acid sequence, 374 residues long: Gibberellin 3-beta-dioxygenase 1 (374 aa).

One can recognise a Fe2OG dioxygenase domain in the interval 206 to 307; it reads KACAALQLNS…RFSVAYLYGP (102 aa). The Fe cation site is built by H231, D233, and H288. R298 is an active-site residue. Position 298 (R298) interacts with 2-oxoglutarate.

The protein belongs to the iron/ascorbate-dependent oxidoreductase family. GA3OX subfamily. L-ascorbate serves as cofactor. Fe(2+) is required as a cofactor. As to expression, expressed in radicles, roots, internodes, cotyledons, leaves and shoots. Barely detected in developing seeds. Not detected in flowers or young fruits.

The enzyme catalyses gibberellin A20 + 2-oxoglutarate + O2 = gibberellin A1 + succinate + CO2. It functions in the pathway plant hormone biosynthesis; gibberellin biosynthesis. Its function is as follows. Converts the inactive gibberellin (GA) precursors GA9 and GA20 in the bioactives gibberellins GA4 and GA1. Has a small activity on GA29, producing GA8. Unable to convert GA20 to GA5, GA5 to GA3 or GA12 to GA14. Involved in the production of bioactive GA for vegetative growth and development, but not for the 3-beta-hydroxylation of GA in developing seeds. The chain is Gibberellin 3-beta-dioxygenase 1 (LE) from Pisum sativum (Garden pea).